The following is a 396-amino-acid chain: S-adenosylmethionine synthase (396 aa).

His-16 provides a ligand contact to ATP. Residue Asp-18 coordinates Mg(2+). Glu-44 is a binding site for K(+). Residues Glu-57 and Gln-100 each coordinate L-methionine. The interval 100–110 (QSPDINQGVDR) is flexible loop. Residues 165 to 167 (DAK), Asp-240, 246 to 247 (RK), Ala-263, and Lys-267 each bind ATP. An L-methionine-binding site is contributed by Asp-240. Residue Lys-271 coordinates L-methionine.

The protein belongs to the AdoMet synthase family. Homotetramer; dimer of dimers. Requires Mg(2+) as cofactor. K(+) is required as a cofactor.

It is found in the cytoplasm. The enzyme catalyses L-methionine + ATP + H2O = S-adenosyl-L-methionine + phosphate + diphosphate. It functions in the pathway amino-acid biosynthesis; S-adenosyl-L-methionine biosynthesis; S-adenosyl-L-methionine from L-methionine: step 1/1. Functionally, catalyzes the formation of S-adenosylmethionine (AdoMet) from methionine and ATP. The overall synthetic reaction is composed of two sequential steps, AdoMet formation and the subsequent tripolyphosphate hydrolysis which occurs prior to release of AdoMet from the enzyme. The protein is S-adenosylmethionine synthase of Pseudomonas fluorescens (strain Pf0-1).